The sequence spans 201 residues: MQPFISHTGLAVIIDSANVDTDQIIPKQFLSKVTRDGFGVHLFHDWRYLDDAGDQLNPDFTLNKPRYQGASILVSQENFGCGSSREHAPWALADFGLKVIIAPSFADIFYGNSINNGLLPVRLADAEVKQLMAEVEAKEGAEISVDLQALTVTSPSGSQFHFEIAQSARHNLLNGLDAIGLTLSHADTIANYEANIPSWRR.

This sequence belongs to the LeuD family. LeuD type 1 subfamily. As to quaternary structure, heterodimer of LeuC and LeuD.

The enzyme catalyses (2R,3S)-3-isopropylmalate = (2S)-2-isopropylmalate. The protein operates within amino-acid biosynthesis; L-leucine biosynthesis; L-leucine from 3-methyl-2-oxobutanoate: step 2/4. Functionally, catalyzes the isomerization between 2-isopropylmalate and 3-isopropylmalate, via the formation of 2-isopropylmaleate. In Shewanella pealeana (strain ATCC 700345 / ANG-SQ1), this protein is 3-isopropylmalate dehydratase small subunit.